The sequence spans 166 residues: MEQLLGQFSLGLFILQIILFVGLILLLKKFAWKPILDAVNEREDGIKNALLSAENARTEMQNLQADNQRILQEARLERDNMLKDAREIKEKMIADSKTEAQAQGIKMIEQAKAAIESEKNAAMAELKSQVSNLSIEIAEKLLKDELSNKDAQTKLVEKMLGDVKLN.

The chain crosses the membrane as a helical span at residues 7-27 (QFSLGLFILQIILFVGLILLL).

It belongs to the ATPase B chain family. As to quaternary structure, F-type ATPases have 2 components, F(1) - the catalytic core - and F(0) - the membrane proton channel. F(1) has five subunits: alpha(3), beta(3), gamma(1), delta(1), epsilon(1). F(0) has three main subunits: a(1), b(2) and c(10-14). The alpha and beta chains form an alternating ring which encloses part of the gamma chain. F(1) is attached to F(0) by a central stalk formed by the gamma and epsilon chains, while a peripheral stalk is formed by the delta and b chains.

The protein resides in the cell inner membrane. In terms of biological role, f(1)F(0) ATP synthase produces ATP from ADP in the presence of a proton or sodium gradient. F-type ATPases consist of two structural domains, F(1) containing the extramembraneous catalytic core and F(0) containing the membrane proton channel, linked together by a central stalk and a peripheral stalk. During catalysis, ATP synthesis in the catalytic domain of F(1) is coupled via a rotary mechanism of the central stalk subunits to proton translocation. Its function is as follows. Component of the F(0) channel, it forms part of the peripheral stalk, linking F(1) to F(0). The polypeptide is ATP synthase subunit b (Flavobacterium psychrophilum (strain ATCC 49511 / DSM 21280 / CIP 103535 / JIP02/86)).